The chain runs to 87 residues: Phosphocarrier protein HPr (87 aa).

Positions 1–87 (MASKDFHIVA…AETMTKEGLA (87 aa)) constitute an HPr domain. The active-site Pros-phosphohistidine intermediate is the His-15. Ser-46 bears the Phosphoserine; by HPrK/P mark.

This sequence belongs to the HPr family.

The protein resides in the cytoplasm. Its activity is regulated as follows. Phosphorylation on Ser-46 inhibits the phosphoryl transfer from enzyme I to HPr. Its function is as follows. General (non sugar-specific) component of the phosphoenolpyruvate-dependent sugar phosphotransferase system (sugar PTS). This major carbohydrate active-transport system catalyzes the phosphorylation of incoming sugar substrates concomitantly with their translocation across the cell membrane. The phosphoryl group from phosphoenolpyruvate (PEP) is transferred to the phosphoryl carrier protein HPr by enzyme I. Phospho-HPr then transfers it to the PTS EIIA domain. In terms of biological role, P-Ser-HPr interacts with the catabolite control protein A (CcpA), forming a complex that binds to DNA at the catabolite response elements cre, operator sites preceding a large number of catabolite-regulated genes. Thus, P-Ser-HPr is a corepressor in carbon catabolite repression (CCR), a mechanism that allows bacteria to coordinate and optimize the utilization of available carbon sources. P-Ser-HPr also plays a role in inducer exclusion, in which it probably interacts with several non-PTS permeases and inhibits their transport activity. The protein is Phosphocarrier protein HPr (ptsH) of Streptococcus salivarius.